We begin with the raw amino-acid sequence, 285 residues long: Pantothenate synthetase (285 aa).

30 to 37 (MGFLHEGH) is an ATP binding site. His-37 acts as the Proton donor in catalysis. Gln-61 contributes to the (R)-pantoate binding site. Gln-61 contributes to the beta-alanine binding site. Position 147–150 (147–150 (GQKD)) interacts with ATP. Position 153 (Gln-153) interacts with (R)-pantoate. Residues Val-176 and 184-187 (KSSR) contribute to the ATP site.

It belongs to the pantothenate synthetase family. In terms of assembly, homodimer.

It is found in the cytoplasm. The catalysed reaction is (R)-pantoate + beta-alanine + ATP = (R)-pantothenate + AMP + diphosphate + H(+). The protein operates within cofactor biosynthesis; (R)-pantothenate biosynthesis; (R)-pantothenate from (R)-pantoate and beta-alanine: step 1/1. Its function is as follows. Catalyzes the condensation of pantoate with beta-alanine in an ATP-dependent reaction via a pantoyl-adenylate intermediate. This chain is Pantothenate synthetase, found in Listeria welshimeri serovar 6b (strain ATCC 35897 / DSM 20650 / CCUG 15529 / CIP 8149 / NCTC 11857 / SLCC 5334 / V8).